Reading from the N-terminus, the 269-residue chain is Polyamine aminopropyltransferase (269 aa).

The PABS domain occupies 1 to 226 (MVWFFEYYDG…ALWSFIIGGE (226 aa)). Gln28 is an S-methyl-5'-thioadenosine binding site. Spermidine-binding residues include His59 and Asp83. Residues Asp102 and 133–134 (DG) contribute to the S-methyl-5'-thioadenosine site. The Proton acceptor role is filled by Asp150. Position 150-153 (150-153 (DSTD)) interacts with spermidine.

This sequence belongs to the spermidine/spermine synthase family. In terms of assembly, homodimer or homotetramer.

The protein localises to the cytoplasm. It carries out the reaction S-adenosyl 3-(methylsulfanyl)propylamine + putrescine = S-methyl-5'-thioadenosine + spermidine + H(+). Its pathway is amine and polyamine biosynthesis; spermidine biosynthesis; spermidine from putrescine: step 1/1. Its function is as follows. Catalyzes the irreversible transfer of a propylamine group from the amino donor S-adenosylmethioninamine (decarboxy-AdoMet) to putrescine (1,4-diaminobutane) to yield spermidine. The protein is Polyamine aminopropyltransferase of Archaeoglobus fulgidus (strain ATCC 49558 / DSM 4304 / JCM 9628 / NBRC 100126 / VC-16).